The sequence spans 284 residues: MRSEQEMMDIFLDFALNDERIRLVTLEGSRTNRNIPPDNFQDYDISYFVTDVESFKENDQWLEIFGKRIMMQKPEDMELFPPELGNWFSYIILFEDGNKLDLTLIPIREAEDYFANNDGLVKVLLDKDSFINYKVTPNDRQYWIKRPTAREFDDCCNEFWMVSTYVVKGLARNEILFAIDHLNEIVRPNLLRMMAWHIASQKGYSFSMGKNYKFMKRYLSNKEWEELMSTYSVNGYQEMWKSLFTCYALFRKYSKAVSEGLAYKYPDYDEGITKYTEGIYCSVK.

As to quaternary structure, homodimer.

Its subcellular location is the cytoplasm. It carries out the reaction streptomycin + ATP = 6-O-adenylylstreptomycin + diphosphate. The catalysed reaction is streptomycin + GTP = 6-O-guanylylstreptomycin + diphosphate. The enzyme catalyses streptidine + ATP = 6-O-adenylylstreptidine + diphosphate. In terms of biological role, mediates bacterial resistance to streptomycin. Adenylates streptomycin on the O-6 residue. Adenylates streptidine on the O-6 residue. Does not act on spectinomycin, neomycin-B or kanamycin. Specific for ATP and GTP nucleotides incorporating a purine ring. No reaction with CTP or UTP. This Bacillus subtilis (strain 168) protein is Aminoglycoside 6-adenylyltransferase.